A 203-amino-acid polypeptide reads, in one-letter code: Hypoxanthine-guanine phosphoribosyltransferase (203 aa).

Residues Lys66 and Gly67 each contribute to the diphosphate site. Mg(2+)-binding residues include Glu122 and Asp123. Residue Asp126 is the Proton acceptor of the active site. Residues Lys154, 175-176 (FV), and Asp182 contribute to the GMP site. Arg188 contributes to the diphosphate binding site.

It belongs to the purine/pyrimidine phosphoribosyltransferase family. Mg(2+) serves as cofactor.

It localises to the cytoplasm. The catalysed reaction is IMP + diphosphate = hypoxanthine + 5-phospho-alpha-D-ribose 1-diphosphate. It carries out the reaction GMP + diphosphate = guanine + 5-phospho-alpha-D-ribose 1-diphosphate. It functions in the pathway purine metabolism; IMP biosynthesis via salvage pathway; IMP from hypoxanthine: step 1/1. Its pathway is purine metabolism; GMP biosynthesis via salvage pathway; GMP from guanine: step 1/1. Functionally, purine salvage pathway enzyme that catalyzes the transfer of the ribosyl-5-phosphate group from 5-phospho-alpha-D-ribose 1-diphosphate (PRPP) to the N9 position of the 6-oxopurines hypoxanthine and guanine to form the corresponding ribonucleotides IMP (inosine 5'-monophosphate) and GMP (guanosine 5'-monophosphate), with the release of PPi. In Mycobacterium avium, this protein is Hypoxanthine-guanine phosphoribosyltransferase (hpt).